Consider the following 486-residue polypeptide: HTH-type transcriptional regulator PrpR (486 aa).

In terms of domain architecture, HTH cro/C1-type spans L22–F76. Residues Q33 to N52 constitute a DNA-binding region (H-T-H motif).

Belongs to the short-chain fatty acyl-CoA assimilation regulator (ScfR) family.

Its pathway is organic acid metabolism; propanoate degradation. It functions in the pathway steroid metabolism; cholesterol metabolism. In terms of biological role, plays a key role in regulating expression of enzymes involved in the catabolism of short chain fatty acids (SCFA) via both the glyoxylate (acetyl degradation route) and the methylcitrate cycle (propionate degradation route). Required for intracellular growth in macrophages and for the assimilation of cholesterol-derived propionate. PrpR acts as a transcriptional activator of prpDC and icl genes when propionate is the main carbon source, and as a ramB repressor. During growth on propionate, PrpR also acts as a transcriptional repressor of dnaA, which encodes the DnaA initiator protein responsible for initiating chromosomal replication. It is possibly involved in the regulation of genes responsible for controlling cholesterol utilization. The sequence is that of HTH-type transcriptional regulator PrpR from Mycobacterium tuberculosis (strain ATCC 25618 / H37Rv).